Here is a 131-residue protein sequence, read N- to C-terminus: Small ribosomal subunit protein bS18 (131 aa).

Polar residues predominate over residues 1 to 10; that stretch reads MSNGTDSKTA. The segment at 1–60 is disordered; sequence MSNGTDSKTASAPPARSGGGFGGGGSRGGDRGDRGDRGGDRGDRGGGLGGDDDKRGGGRG. Residues 17–27 show a composition bias toward gly residues; sequence SGGGFGGGGSR. A compositionally biased stretch (basic and acidic residues) spans 28–44; that stretch reads GGDRGDRGDRGGDRGDR.

It belongs to the bacterial ribosomal protein bS18 family. In terms of assembly, part of the 30S ribosomal subunit. Forms a tight heterodimer with protein bS6.

Functionally, binds as a heterodimer with protein bS6 to the central domain of the 16S rRNA, where it helps stabilize the platform of the 30S subunit. The sequence is that of Small ribosomal subunit protein bS18 from Myxococcus xanthus (strain DK1622).